The following is a 726-amino-acid chain: DNA ligase (726 aa).

NAD(+) contacts are provided by residues 34-38 (DAEYD), 83-84 (SL), and glutamate 115. The N6-AMP-lysine intermediate role is filled by lysine 117. NAD(+) contacts are provided by arginine 138, glutamate 190, lysine 306, and lysine 330. Positions 424, 427, 442, and 448 each coordinate Zn(2+). Residues 608 to 698 (SRGNALAGKT…RTADDQATPA (91 aa)) form the BRCT domain. Positions 690 to 726 (TADDQATPASDRRAATASVPPSDDAPGSPRQLDFDLT) are disordered.

Belongs to the NAD-dependent DNA ligase family. LigA subfamily. Mg(2+) is required as a cofactor. Requires Mn(2+) as cofactor.

The enzyme catalyses NAD(+) + (deoxyribonucleotide)n-3'-hydroxyl + 5'-phospho-(deoxyribonucleotide)m = (deoxyribonucleotide)n+m + AMP + beta-nicotinamide D-nucleotide.. DNA ligase that catalyzes the formation of phosphodiester linkages between 5'-phosphoryl and 3'-hydroxyl groups in double-stranded DNA using NAD as a coenzyme and as the energy source for the reaction. It is essential for DNA replication and repair of damaged DNA. The chain is DNA ligase from Roseiflexus sp. (strain RS-1).